Here is a 179-residue protein sequence, read N- to C-terminus: MTLNSSHTDAGGLSHSIAVYTGSFDPVTLGHLHIIERASKLFDTLVVGIGINADKKSLFNPEERIELVQTISNHLPNVRVQTFDGLAVDFVRSLGAGVMVRGIRPLTDIAGEFTMMMANRQLDADIETVFLMADERFAHVSSSLLKQIAALSENDDHLAKFVPRPIIPSLRAKLAAPSV.

Serine 23 serves as a coordination point for substrate. ATP contacts are provided by residues 23–24 (SF) and histidine 31. Residues lysine 55, alanine 87, and arginine 101 each coordinate substrate. ATP-binding positions include 102–104 (GIR), glutamate 112, and 137–143 (FAHVSSS).

The protein belongs to the bacterial CoaD family. In terms of assembly, homohexamer. The cofactor is Mg(2+).

The protein localises to the cytoplasm. It carries out the reaction (R)-4'-phosphopantetheine + ATP + H(+) = 3'-dephospho-CoA + diphosphate. The protein operates within cofactor biosynthesis; coenzyme A biosynthesis; CoA from (R)-pantothenate: step 4/5. Functionally, reversibly transfers an adenylyl group from ATP to 4'-phosphopantetheine, yielding dephospho-CoA (dPCoA) and pyrophosphate. This is Phosphopantetheine adenylyltransferase from Rhodopirellula baltica (strain DSM 10527 / NCIMB 13988 / SH1).